Reading from the N-terminus, the 237-residue chain is Uridylate kinase (237 aa).

An ATP-binding site is contributed by 9 to 12; sequence KLSG. Positions 17-22 are involved in allosteric activation by GTP; that stretch reads GSQGYG. Gly51 contributes to the UMP binding site. Residues Gly52 and Arg56 each coordinate ATP. UMP is bound by residues Asp71 and 132 to 139; that span reads CGNPFFTT. ATP is bound by residues Thr159, Tyr165, and Asp168.

Belongs to the UMP kinase family. In terms of assembly, homohexamer.

It is found in the cytoplasm. The catalysed reaction is UMP + ATP = UDP + ADP. It participates in pyrimidine metabolism; CTP biosynthesis via de novo pathway; UDP from UMP (UMPK route): step 1/1. Its activity is regulated as follows. Allosterically activated by GTP. Inhibited by UTP. In terms of biological role, catalyzes the reversible phosphorylation of UMP to UDP. This is Uridylate kinase from Synechococcus sp. (strain CC9605).